The sequence spans 56 residues: Large ribosomal subunit protein bL33 (56 aa).

It belongs to the bacterial ribosomal protein bL33 family.

In Acidovorax sp. (strain JS42), this protein is Large ribosomal subunit protein bL33.